The sequence spans 165 residues: Choriogonadotropin subunit beta (165 aa).

Positions 1-20 (METLQGLLLWLLLSMGGAQA) are cleaved as a signal peptide. Cystine bridges form between Cys29-Cys77, Cys43-Cys92, Cys46-Cys130, Cys54-Cys108, Cys58-Cys110, and Cys113-Cys120. Residues Asn33 and Asn50 are each glycosylated (N-linked (GlcNAc...) asparagine). The interval 131-165 (DDPNLQASSSSKDPPPSPPSPSRLLEPAGTPFLPQ) is disordered. Residues Ser141, Ser147, and Ser152 are each glycosylated (O-linked (GalNAc...) serine).

The protein belongs to the glycoprotein hormones subunit beta family. As to quaternary structure, heterodimer of a common alpha chain and a unique beta chain which confers biological specificity to thyrotropin, lutropin, follitropin and gonadotropin. As to expression, placenta.

The protein localises to the secreted. Stimulates the ovaries to synthesize the steroids that are essential for the maintenance of pregnancy. This is Choriogonadotropin subunit beta (CGB) from Papio anubis (Olive baboon).